Reading from the N-terminus, the 100-residue chain is Guanine nucleotide exchange factor MSS4 homolog (100 aa).

The region spanning 1–100 (MSNLRIVCQH…YLLLCSLEKN (100 aa)) is the MSS4 domain. Zn(2+) is bound by residues cysteine 8, cysteine 11, cysteine 73, and cysteine 76.

This sequence belongs to the DSS4/MSS4 family.

In terms of biological role, guanine-nucleotide-releasing protein that acts on members of the sec4/ypt1/rab subfamily. In Schizosaccharomyces pombe (strain 972 / ATCC 24843) (Fission yeast), this protein is Guanine nucleotide exchange factor MSS4 homolog.